A 252-amino-acid polypeptide reads, in one-letter code: Type III pantothenate kinase (252 aa).

6–13 (DIGNTNIV) contacts ATP. 107–110 (GADL) lines the substrate pocket. Aspartate 109 functions as the Proton acceptor in the catalytic mechanism. A K(+)-binding site is contributed by aspartate 129. ATP is bound at residue threonine 132. Threonine 184 contributes to the substrate binding site.

Belongs to the type III pantothenate kinase family. Homodimer. NH4(+) serves as cofactor. Requires K(+) as cofactor.

It is found in the cytoplasm. It catalyses the reaction (R)-pantothenate + ATP = (R)-4'-phosphopantothenate + ADP + H(+). It participates in cofactor biosynthesis; coenzyme A biosynthesis; CoA from (R)-pantothenate: step 1/5. Its function is as follows. Catalyzes the phosphorylation of pantothenate (Pan), the first step in CoA biosynthesis. The chain is Type III pantothenate kinase from Bifidobacterium animalis subsp. lactis (strain AD011).